A 275-amino-acid polypeptide reads, in one-letter code: NH(3)-dependent NAD(+) synthetase (275 aa).

50–57 serves as a coordination point for ATP; that stretch reads GISGGVDS. Asp-56 is a Mg(2+) binding site. Arg-147 is a binding site for deamido-NAD(+). Residue Thr-167 coordinates ATP. Glu-172 contributes to the Mg(2+) binding site. Residues Lys-180 and Asp-187 each coordinate deamido-NAD(+). The ATP site is built by Lys-196 and Thr-218. 267-268 contributes to the deamido-NAD(+) binding site; sequence HK.

This sequence belongs to the NAD synthetase family. Homodimer.

It carries out the reaction deamido-NAD(+) + NH4(+) + ATP = AMP + diphosphate + NAD(+) + H(+). It participates in cofactor biosynthesis; NAD(+) biosynthesis; NAD(+) from deamido-NAD(+) (ammonia route): step 1/1. In terms of biological role, catalyzes the ATP-dependent amidation of deamido-NAD to form NAD. Uses ammonia as a nitrogen source. This Pseudomonas putida (strain GB-1) protein is NH(3)-dependent NAD(+) synthetase.